The primary structure comprises 176 residues: ATP-dependent protease subunit HslV (176 aa).

Residue Thr2 is part of the active site. Na(+) contacts are provided by Ala157, Cys160, and Thr163.

It belongs to the peptidase T1B family. HslV subfamily. A double ring-shaped homohexamer of HslV is capped on each side by a ring-shaped HslU homohexamer. The assembly of the HslU/HslV complex is dependent on binding of ATP.

The protein localises to the cytoplasm. It carries out the reaction ATP-dependent cleavage of peptide bonds with broad specificity.. With respect to regulation, allosterically activated by HslU binding. Its function is as follows. Protease subunit of a proteasome-like degradation complex believed to be a general protein degrading machinery. In Buchnera aphidicola subsp. Acyrthosiphon pisum (strain APS) (Acyrthosiphon pisum symbiotic bacterium), this protein is ATP-dependent protease subunit HslV.